The sequence spans 210 residues: Endonuclease III (210 aa).

The HhH domain maps to 108-127; that stretch reads FKALIKLPGVGRKTANVVLN. Positions 187, 194, 197, and 203 each coordinate [4Fe-4S] cluster.

Belongs to the Nth/MutY family. The cofactor is [4Fe-4S] cluster.

The enzyme catalyses 2'-deoxyribonucleotide-(2'-deoxyribose 5'-phosphate)-2'-deoxyribonucleotide-DNA = a 3'-end 2'-deoxyribonucleotide-(2,3-dehydro-2,3-deoxyribose 5'-phosphate)-DNA + a 5'-end 5'-phospho-2'-deoxyribonucleoside-DNA + H(+). In terms of biological role, DNA repair enzyme that has both DNA N-glycosylase activity and AP-lyase activity. The DNA N-glycosylase activity releases various damaged pyrimidines from DNA by cleaving the N-glycosidic bond, leaving an AP (apurinic/apyrimidinic) site. The AP-lyase activity cleaves the phosphodiester bond 3' to the AP site by a beta-elimination, leaving a 3'-terminal unsaturated sugar and a product with a terminal 5'-phosphate. The polypeptide is Endonuclease III (Rickettsia conorii (strain ATCC VR-613 / Malish 7)).